We begin with the raw amino-acid sequence, 128 residues long: MTTTPETQKTAVAHGNYVRGSASKVRRVLDQIRGRSYRDALIMLEFMPYRSTDPITKVLRSAVANAEHNLGMDPSTLVISSAWANSGPVMKRYRPRAQGRAFSIKKQTCHISISVESAPTQTNAEVQN.

The protein belongs to the universal ribosomal protein uL22 family. In terms of assembly, part of the 50S ribosomal subunit.

This protein binds specifically to 23S rRNA; its binding is stimulated by other ribosomal proteins, e.g. L4, L17, and L20. It is important during the early stages of 50S assembly. It makes multiple contacts with different domains of the 23S rRNA in the assembled 50S subunit and ribosome. In terms of biological role, the globular domain of the protein is located near the polypeptide exit tunnel on the outside of the subunit, while an extended beta-hairpin is found that lines the wall of the exit tunnel in the center of the 70S ribosome. This chain is Large ribosomal subunit protein uL22, found in Prochlorococcus marinus (strain MIT 9301).